A 95-amino-acid polypeptide reads, in one-letter code: Large ribosomal subunit protein eL37y (95 aa).

Positions 19, 22, 34, and 37 each coordinate Zn(2+). The C4-type zinc finger occupies 19–37; it reads CVRCGRRSFHIQKSRCSAC.

It belongs to the eukaryotic ribosomal protein eL37 family. It depends on Zn(2+) as a cofactor.

In terms of biological role, binds to the 23S rRNA. The chain is Large ribosomal subunit protein eL37y (RPL37B) from Arabidopsis thaliana (Mouse-ear cress).